The chain runs to 291 residues: MPELPEVEVTRLGLLPHITGRRIVRAVVRHHGLRWPVDPALPELLAGLTVTRLLRRGKYLLIECVPEVEQSGRAADTVGGWLLIHLGMTGTLRVLETPVPPGLHDHVDIELAGATGVHVTLRYRDPRRFGAVLWHAGDEAGLAEHPLLRNLGIEPFDARFDGDWMFARTRGRRVAIKSALLAGDIVVGVGNIYCSESLFRAGIRPTTAAGRISRPRYAALADAIRATLADAIARGGSTLRDFVGSDGQSGYFQLEAFVYDRAGLPCRACGTPIRQIVQGQRSTFCCPTCQR.

The active-site Schiff-base intermediate with DNA is the P2. The active-site Proton donor is E3. K58 functions as the Proton donor; for beta-elimination activity in the catalytic mechanism. Residues H104, R127, and R172 each contribute to the DNA site. An FPG-type zinc finger spans residues 257 to 291 (FVYDRAGLPCRACGTPIRQIVQGQRSTFCCPTCQR). R281 functions as the Proton donor; for delta-elimination activity in the catalytic mechanism.

The protein belongs to the FPG family. Monomer. The cofactor is Zn(2+).

It carries out the reaction Hydrolysis of DNA containing ring-opened 7-methylguanine residues, releasing 2,6-diamino-4-hydroxy-5-(N-methyl)formamidopyrimidine.. It catalyses the reaction 2'-deoxyribonucleotide-(2'-deoxyribose 5'-phosphate)-2'-deoxyribonucleotide-DNA = a 3'-end 2'-deoxyribonucleotide-(2,3-dehydro-2,3-deoxyribose 5'-phosphate)-DNA + a 5'-end 5'-phospho-2'-deoxyribonucleoside-DNA + H(+). In terms of biological role, involved in base excision repair of DNA damaged by oxidation or by mutagenic agents. Acts as a DNA glycosylase that recognizes and removes damaged bases. Has a preference for oxidized purines, such as 7,8-dihydro-8-oxoguanine (8-oxoG). Has AP (apurinic/apyrimidinic) lyase activity and introduces nicks in the DNA strand. Cleaves the DNA backbone by beta-delta elimination to generate a single-strand break at the site of the removed base with both 3'- and 5'-phosphates. The sequence is that of Formamidopyrimidine-DNA glycosylase from Ralstonia pickettii (strain 12J).